Consider the following 607-residue polypeptide: Autophagy-related protein 22-2 (607 aa).

A disordered region spans residues 9–31 (FQSPSPDEGVQQRPPRYVGEDTT). Residues 44 to 64 (YGIAAEVFAVCGVGSFLPLTL) form a helical membrane-spanning segment. Asn-88 and Asn-91 each carry an N-linked (GlcNAc...) asparagine glycan. A run of 3 helical transmembrane segments spans residues 111–131 (SFAM…LISF), 143–160 (TLLM…MLFV), and 161–178 (FIAP…VVGV). The interval 203–263 (QEGKADDGTE…GMGTKAPLSS (61 aa)) is disordered. Asn-235 carries N-linked (GlcNAc...) asparagine glycosylation. The next 8 helical transmembrane spans lie at 277 to 297 (GIGL…IMLL), 310 to 330 (TLPM…FTLV), 381 to 401 (VLIF…VSGT), 415 to 435 (PLIG…AFLW), 450 to 470 (IILC…AYIP), 484 to 504 (WEIF…ASYC), 521 to 543 (YALY…GGIV), and 552 to 572 (GFFF…MVNA). Positions 585–607 (TLGKSHGGPAEDAQEAEGLLARE) are disordered.

The protein belongs to the ATG22 family.

The protein localises to the vacuole membrane. In terms of biological role, vacuolar effluxer which mediate the efflux of amino acids resulting from autophagic degradation. The release of autophagic amino acids allows the maintenance of protein synthesis and viability during nitrogen starvation. This Penicillium rubens (strain ATCC 28089 / DSM 1075 / NRRL 1951 / Wisconsin 54-1255) (Penicillium chrysogenum) protein is Autophagy-related protein 22-2 (atg22-2).